Reading from the N-terminus, the 529-residue chain is Listeriolysin O (529 aa).

The N-terminal stretch at 1 to 24 (MKKIMLVFITLILVSLPIAQQTEA) is a signal peptide. The next 4 membrane-spanning stretches (beta stranded) occupy residues 214–227 (ESQLIAKFGTAFKA), 234–243 (VNFGAISEGK), 312–321 (STKVKAAFDA), and 329–341 (SGDVELTNIIKNS). The short motif at 483 to 493 (ECTGLAWEWWR) is the Conserved undecapeptide element. Positions 515–516 (TL) match the Cholesterol binding motif.

This sequence belongs to the cholesterol-dependent cytolysin family. As to quaternary structure, homooligomeric pore complex of 35 to 50 subunits; when inserted in the host membrane.

The protein localises to the secreted. The protein resides in the host membrane. It localises to the host cell membrane. Activity of listeriolysin O is regulated on multiple levels. It should be high in the phagosome, thereby allowing escape of the bacteria from the phagosomal compartment. Then, once inside the host cytosol, the activity must be controlled to prevent lysis of the host plasma membrane and loss of the intracellular environment. Functionally, a cholesterol-dependent toxin that causes cytolysis by forming pores in cholesterol containing host membranes. After binding to target membranes, the protein undergoes a major conformation change, leading to its insertion in the host membrane and formation of an oligomeric pore complex. Cholesterol is required for binding to host membranes, membrane insertion and pore formation; cholesterol binding is mediated by a Thr-Leu pair in the C-terminus. Acts as a major virulence factor required for the escape of bacteria from phagosomal vacuoles and entry into the host cytosol. Can be reversibly inactivated by oxidation. The polypeptide is Listeriolysin O (hly) (Listeria monocytogenes serotype 4b (strain CLIP80459)).